The primary structure comprises 292 residues: GTP cyclohydrolase FolE2 (292 aa).

This sequence belongs to the GTP cyclohydrolase IV family.

The catalysed reaction is GTP + H2O = 7,8-dihydroneopterin 3'-triphosphate + formate + H(+). Its pathway is cofactor biosynthesis; 7,8-dihydroneopterin triphosphate biosynthesis; 7,8-dihydroneopterin triphosphate from GTP: step 1/1. Converts GTP to 7,8-dihydroneopterin triphosphate. In Staphylococcus saprophyticus subsp. saprophyticus (strain ATCC 15305 / DSM 20229 / NCIMB 8711 / NCTC 7292 / S-41), this protein is GTP cyclohydrolase FolE2.